A 303-amino-acid chain; its full sequence is Small ribosomal subunit protein bS1m (303 aa).

Ser2 bears the N-acetylserine mark. The transit peptide at 2–13 (SFAQILRGSRAM) directs the protein to the mitochondrion; not cleaved.

This sequence belongs to the bacterial ribosomal protein bS1 family. Component of the mitochondrial small ribosomal subunit (mt-SSU). Mature yeast 74S mitochondrial ribosomes consist of a small (37S) and a large (54S) subunit. The 37S small subunit contains a 15S ribosomal RNA (15S mt-rRNA) and at least 32 different proteins. The 54S large subunit contains a 21S rRNA (21S mt-rRNA) and at least 45 different proteins. This subunit is mutually exclusive with mug178/small ribosomal subunit protein L51-b.

It is found in the mitochondrion. In terms of biological role, component of the mitochondrial ribosome (mitoribosome), a dedicated translation machinery responsible for the synthesis of mitochondrial genome-encoded proteins, including at least some of the essential transmembrane subunits of the mitochondrial respiratory chain. The mitoribosomes are attached to the mitochondrial inner membrane and translation products are cotranslationally integrated into the membrane. bS1m functionally interacts with the 5'-UTR of mitochondrial mRNAs. Plays an essential role in mitochondrial translation. This Schizosaccharomyces pombe (strain 972 / ATCC 24843) (Fission yeast) protein is Small ribosomal subunit protein bS1m (mrp51).